A 131-amino-acid polypeptide reads, in one-letter code: UPF0102 protein YraN (131 aa).

A compositionally biased stretch (polar residues) spans 1–19 (MATVPTRSGSPRQLTTKQT). The disordered stretch occupies residues 1–20 (MATVPTRSGSPRQLTTKQTG).

Belongs to the UPF0102 family.

The sequence is that of UPF0102 protein YraN from Escherichia coli O157:H7.